The following is a 288-amino-acid chain: Elongation factor Ts (288 aa).

Residues 79-82 (TDFV) are involved in Mg(2+) ion dislocation from EF-Tu.

It belongs to the EF-Ts family.

The protein localises to the cytoplasm. Functionally, associates with the EF-Tu.GDP complex and induces the exchange of GDP to GTP. It remains bound to the aminoacyl-tRNA.EF-Tu.GTP complex up to the GTP hydrolysis stage on the ribosome. This is Elongation factor Ts from Ehrlichia ruminantium (strain Welgevonden).